The primary structure comprises 147 residues: Protein Turandot Z (147 aa).

An N-terminal signal peptide occupies residues 1 to 23 (MYFAIRLSFVLAVLICLTGNGSA).

The protein belongs to the Turandot family.

The protein resides in the secreted. Functionally, a humoral factor that may play a role in stress tolerance. In Drosophila melanogaster (Fruit fly), this protein is Protein Turandot Z.